A 338-amino-acid chain; its full sequence is 1-aminocyclopropane-1-carboxylate deaminase (338 aa).

An N6-(pyridoxal phosphate)lysine modification is found at lysine 51. The active-site Nucleophile is the serine 78.

Belongs to the ACC deaminase/D-cysteine desulfhydrase family. In terms of assembly, homotrimer. Requires pyridoxal 5'-phosphate as cofactor.

It catalyses the reaction 1-aminocyclopropane-1-carboxylate + H2O = 2-oxobutanoate + NH4(+). Functionally, catalyzes a cyclopropane ring-opening reaction, the irreversible conversion of 1-aminocyclopropane-1-carboxylate (ACC) to ammonia and alpha-ketobutyrate. Allows growth on ACC as a nitrogen source. This is 1-aminocyclopropane-1-carboxylate deaminase from Methylibium petroleiphilum (strain ATCC BAA-1232 / LMG 22953 / PM1).